The chain runs to 158 residues: Transcriptional repressor NrdR (158 aa).

A zinc finger lies at 3-34 (CPYCGFEESKVVDSRSTEDHKAIRRRRECLKC). Residues 49-139 (VLVIKRDSNR…VYRQFKDINT (91 aa)) enclose the ATP-cone domain.

This sequence belongs to the NrdR family. Zn(2+) is required as a cofactor.

Its function is as follows. Negatively regulates transcription of bacterial ribonucleotide reductase nrd genes and operons by binding to NrdR-boxes. This Clostridium novyi (strain NT) protein is Transcriptional repressor NrdR.